The primary structure comprises 291 residues: Probable 2-(5''-triphosphoribosyl)-3'-dephosphocoenzyme-A synthase (291 aa).

Belongs to the CitG/MdcB family.

It catalyses the reaction 3'-dephospho-CoA + ATP = 2'-(5''-triphospho-alpha-D-ribosyl)-3'-dephospho-CoA + adenine. In terms of biological role, involved in the formation of 2-(5''-phosphoribosyl)-3'-dephosphocoenzyme-A, the prosthetic group of the acyl-carrier protein of the malonate decarboxylase. This chain is Probable 2-(5''-triphosphoribosyl)-3'-dephosphocoenzyme-A synthase, found in Pseudomonas syringae pv. tomato (strain ATCC BAA-871 / DC3000).